A 129-amino-acid polypeptide reads, in one-letter code: UPF0102 protein Clim_0016 (129 aa).

Belongs to the UPF0102 family.

This is UPF0102 protein Clim_0016 from Chlorobium limicola (strain DSM 245 / NBRC 103803 / 6330).